We begin with the raw amino-acid sequence, 135 residues long: S-protein homolog 29 (135 aa).

The N-terminal stretch at 1 to 24 (MKNSSKIFVVLSIILFYVISSCHG) is a signal peptide. Asparagine 110 carries an N-linked (GlcNAc...) asparagine glycan.

Belongs to the plant self-incompatibility (S1) protein family.

It localises to the secreted. This is S-protein homolog 29 from Arabidopsis thaliana (Mouse-ear cress).